The chain runs to 419 residues: Transcription termination factor Rho (419 aa).

Residues 48–123 (DIFGDGVLEI…LKVNEVNFDK (76 aa)) form the Rho RNA-BD domain. RNA-binding regions lie at residues 61–66 (GFGFLR), 78–80 (DIY), and 108–110 (ERY). ATP contacts are provided by residues 169–174 (GRGQRG), 181–186 (KAGKTM), and R212. Positions 284-288 (VLTGG) are RNA-binding 2.

The protein belongs to the Rho family. Homohexamer. The homohexamer assembles into an open ring structure.

Its function is as follows. Facilitates transcription termination by a mechanism that involves Rho binding to the nascent RNA, activation of Rho's RNA-dependent ATPase activity, and release of the mRNA from the DNA template. This Escherichia coli O157:H7 protein is Transcription termination factor Rho.